The sequence spans 140 residues: UPF0102 protein Ppro_1186 (140 aa).

Positions 1-27 (MKRPGDGRQESPSSTARPDNRNTGSRG) are disordered. A compositionally biased stretch (polar residues) spans 10–25 (ESPSSTARPDNRNTGS).

It belongs to the UPF0102 family.

The polypeptide is UPF0102 protein Ppro_1186 (Pelobacter propionicus (strain DSM 2379 / NBRC 103807 / OttBd1)).